A 393-amino-acid chain; its full sequence is Protein shisa-9B (393 aa).

A signal peptide spans 1–20; sequence MKSTGLLLGYFLMKVLVCDA. The Extracellular portion of the chain corresponds to 21 to 131; that stretch reads EGEPGKSLDG…MDQHDPTKDK (111 aa). The interval 28 to 52 is disordered; that stretch reads LDGAVTASGSNDSRDGENGLSETPH. A glycan (N-linked (GlcNAc...) asparagine) is linked at Asn38. A helical membrane pass occupies residues 132-152; that stretch reads TNLIVYIICGVVAIMALVGIF. Topologically, residues 153–393 are cytoplasmic; sequence TKLGLEKAHR…VTNSKTEVTV (241 aa). A disordered region spans residues 307-340; that stretch reads QKQNGHKSKSTKVHSSHPLAYGSNTIANPGRMSS. Residues 310 to 321 are compositionally biased toward basic residues; sequence NGHKSKSTKVHS.

Belongs to the shisa family. SHISA9 subfamily. In terms of assembly, component of some AMPA receptors (ionotropic glutamate receptors) complex.

It is found in the cell projection. Its subcellular location is the dendritic spine membrane. The protein resides in the synapse. In terms of biological role, regulator of short-term neuronal synaptic plasticity in the dentate gyrus. Associates with AMPA receptors (ionotropic glutamate receptors) in synaptic spines and promotes AMPA receptor desensitization at excitatory synapses. This is Protein shisa-9B (shisa9b) from Danio rerio (Zebrafish).